We begin with the raw amino-acid sequence, 326 residues long: Biotin synthase (326 aa).

The Radical SAM core domain maps to 47–274 (NEVQVSSLLS…ASRVRLSAGR (228 aa)). [4Fe-4S] cluster contacts are provided by Cys-62, Cys-66, and Cys-69. Positions 106, 137, 197, and 269 each coordinate [2Fe-2S] cluster.

It belongs to the radical SAM superfamily. Biotin synthase family. In terms of assembly, homodimer. [4Fe-4S] cluster serves as cofactor. [2Fe-2S] cluster is required as a cofactor.

It carries out the reaction (4R,5S)-dethiobiotin + (sulfur carrier)-SH + 2 reduced [2Fe-2S]-[ferredoxin] + 2 S-adenosyl-L-methionine = (sulfur carrier)-H + biotin + 2 5'-deoxyadenosine + 2 L-methionine + 2 oxidized [2Fe-2S]-[ferredoxin]. It functions in the pathway cofactor biosynthesis; biotin biosynthesis; biotin from 7,8-diaminononanoate: step 2/2. In terms of biological role, catalyzes the conversion of dethiobiotin (DTB) to biotin by the insertion of a sulfur atom into dethiobiotin via a radical-based mechanism. The protein is Biotin synthase of Methylococcus capsulatus (strain ATCC 33009 / NCIMB 11132 / Bath).